A 377-amino-acid polypeptide reads, in one-letter code: Opsin-5 (377 aa).

Residues M1–D33 are Extracellular-facing. N-linked (GlcNAc...) asparagine glycosylation occurs at N4. Residues L34–V54 traverse the membrane as a helical segment. Residues L55–N74 are Cytoplasmic-facing. Residues L75–F95 traverse the membrane as a helical segment. The Extracellular portion of the chain corresponds to C96–W108. A disulfide bridge connects residues C106 and C183. A helical membrane pass occupies residues Y109–L129. Residues D130 to Y150 lie on the Cytoplasmic side of the membrane. The chain crosses the membrane as a helical span at residues I151–L171. At G172 to Q197 the chain is on the extracellular side. A helical transmembrane segment spans residues V198 to S218. Residues Y219–K252 lie on the Cytoplasmic side of the membrane. A helical membrane pass occupies residues V253–V273. Residues W274–S288 lie on the Extracellular side of the membrane. A helical membrane pass occupies residues V289–I309. K296 bears the N6-(retinylidene)lysine mark. Topologically, residues D310–K377 are cytoplasmic. S-palmitoyl cysteine attachment occurs at residues C315 and C316. The segment at F357–K377 is disordered. Positions M363–K377 are enriched in basic and acidic residues.

Belongs to the G-protein coupled receptor 1 family. Opsin subfamily. It is uncertain whether Cys-315 or Cys-316 is palmitoylated. In terms of tissue distribution, expressed in the brain (at protein level). Weakly expressed in the skin and liver (at protein level). Abundantly expressed in striated muscle cells. Expressed in Math7/Atok7-dependent retinal ganglion cells in the ganglion cell layer (at protein level). Additionally expressed in horizontal and amacrine cells in the inner nuclear layer of the retina (at protein level). Expressed around the base of hair follicles and in epidermal and sebaceous gland cells of the outer ear (at protein level). Abundantly expressed in vibrissae hair follicles and weakly expressed in the vibrissae skin pad, dorsal back skin, and tail.

It is found in the cell membrane. Its function is as follows. G-protein coupled receptor which selectively activates G(i) type G proteins via ultraviolet A (UVA) light-mediated activation in the retina. Preferentially binds the chromophore 11-cis retinal and is a bistable protein that displays emission peaks at 380 nm (UVA light) and 470 nm (blue light). Required for the light-response in the inner plexiform layer, and contributes to the regulation of the light-response in the nerve fiber layer, via phosphorylated DAT/SLC6A3 dopamine uptake. Involved in local corneal and retinal circadian rhythm photoentrainment via modulation of the UVA light-induced phase-shift of the retina clock. Acts as a circadian photoreceptor in the outer ear and vibrissal pads, via modulation of circadian clock-gene expression in response to violet light during the light-to-dark transition phase and night phase of the circadian cycle. Required in the retina to negatively regulate hyaloid vessel regression during postnatal development via light-dependent OPN5-SLC32A1-DRD2-VEGFR2 signaling. Involved in the light-dependent regulation of retina and vitreous compartment dopamine levels. This Mus musculus (Mouse) protein is Opsin-5 (Opn5).